A 199-amino-acid polypeptide reads, in one-letter code: Fe/S biogenesis protein NfuA (199 aa).

Residues cysteine 151 and cysteine 154 each coordinate [4Fe-4S] cluster.

The protein belongs to the NfuA family. As to quaternary structure, homodimer. It depends on [4Fe-4S] cluster as a cofactor.

Its function is as follows. Involved in iron-sulfur cluster biogenesis. Binds a 4Fe-4S cluster, can transfer this cluster to apoproteins, and thereby intervenes in the maturation of Fe/S proteins. Could also act as a scaffold/chaperone for damaged Fe/S proteins. This Xylella fastidiosa (strain M12) protein is Fe/S biogenesis protein NfuA.